The sequence spans 289 residues: B- and T-lymphocyte attenuator (289 aa).

An N-terminal signal peptide occupies residues 1 to 30; that stretch reads MKTLPAMLGTGKLFWVFFLIPYLDIWNIHG. In terms of domain architecture, Ig-like V-type spans 31 to 132; sequence KESCDVQLYI…LIESHSTTLY (102 aa). The Extracellular segment spans residues 31 to 157; that stretch reads KESCDVQLYI…MASRPWLLYR (127 aa). 3 disulfide bridges follow: Cys-34–Cys-63, Cys-58–Cys-115, and Cys-72–Cys-79. 3 N-linked (GlcNAc...) asparagine glycosylation sites follow: Asn-75, Asn-94, and Asn-110. A helical transmembrane segment spans residues 158–178; sequence LLPLGGLPLLITTCFCLFCCL. At 179–289 the chain is on the cytoplasmic side; that stretch reads RRHQGKQNEL…TEYASICVRS (111 aa).

In terms of assembly, interacts with tyrosine phosphatases PTPN6/SHP-1 and PTPN11/SHP-2. Interacts with TNFRSF14/HVEM (via cysteine-rich domain 1). In terms of processing, phosphorylated on Tyr residues by TNFRSF14 and by antigen receptors cross-linking, both inducing association with PTPN6 and PTPN11. N-glycosylated.

The protein resides in the cell membrane. Inhibitory receptor on lymphocytes that negatively regulates antigen receptor signaling via PTPN6/SHP-1 and PTPN11/SHP-2. May interact in cis (on the same cell) or in trans (on other cells) with TNFRSF14. In cis interactions, appears to play an immune regulatory role inhibiting in trans interactions in naive T cells to maintain a resting state. In trans interactions, can predominate during adaptive immune response to provide survival signals to effector T cells. In Homo sapiens (Human), this protein is B- and T-lymphocyte attenuator.